The sequence spans 268 residues: Protein DEEPER ROOTING 1 (268 aa).

The span at 11 to 21 shows a compositional bias: low complexity; it reads LNGKQGNKKPN. Residues 11-39 are disordered; the sequence is LNGKQGNKKPNTVPITTHPAKQEPREEFS. A compositionally biased stretch (basic and acidic residues) spans 30–39; that stretch reads AKQEPREEFS. The IGT motif signature appears at 44-50; the sequence is GLLAIGT. The segment at 220 to 246 is disordered; sequence SRAASMKKYLEDRQIPTKKESNTEDDT. A compositionally biased stretch (basic and acidic residues) spans 227 to 246; sequence KYLEDRQIPTKKESNTEDDT.

The protein belongs to the LAZY family. Expressed in roots.

Its function is as follows. Involved in the development of the root system architecture by influencing lateral root angles and primary root length. The sequence is that of Protein DEEPER ROOTING 1 from Prunus persica (Peach).